Reading from the N-terminus, the 727-residue chain is Beta-galactosidase 2 (727 aa).

Residues Met1–Ala27 form the signal peptide. Glu185 acts as the Proton donor in catalysis. The Nucleophile role is filled by Glu254. Asn255 carries an N-linked (GlcNAc...) asparagine glycan.

It belongs to the glycosyl hydrolase 35 family. As to expression, ubiquitous, with higher expression levels in roots and siliques.

Its subcellular location is the secreted. The protein localises to the extracellular space. The protein resides in the apoplast. The enzyme catalyses Hydrolysis of terminal non-reducing beta-D-galactose residues in beta-D-galactosides.. The chain is Beta-galactosidase 2 (BGAL2) from Arabidopsis thaliana (Mouse-ear cress).